A 552-amino-acid chain; its full sequence is Chaperonin GroEL (552 aa).

ATP-binding positions include 30-33 (TLGP), K51, 87-91 (DGTTT), G415, and D499.

This sequence belongs to the chaperonin (HSP60) family. As to quaternary structure, forms a cylinder of 14 subunits composed of two heptameric rings stacked back-to-back. Interacts with the co-chaperonin GroES.

It is found in the cytoplasm. The catalysed reaction is ATP + H2O + a folded polypeptide = ADP + phosphate + an unfolded polypeptide.. Its function is as follows. Together with its co-chaperonin GroES, plays an essential role in assisting protein folding. The GroEL-GroES system forms a nano-cage that allows encapsulation of the non-native substrate proteins and provides a physical environment optimized to promote and accelerate protein folding. This Hamiltonella defensa subsp. Acyrthosiphon pisum (strain 5AT) protein is Chaperonin GroEL.